We begin with the raw amino-acid sequence, 255 residues long: MRILCTNDDGIHAPGLKIVEDIARALSDDVWVVAPELDQSGVSHSLSLNDPLRLREVGPRHFAVRGTPTDCVIMGARHILADKAPDLVLSGVNRGRNVAEDVVYSGTIAGALEGTILGLPSFALSQEFTLETRNAPLWDTAKAHGPEILRKAIKAGVPKNTVININFPACAPDEVAGVQVTRQGKRNQGFLRVDERHDGRGNPYFWIGFERVAVVDMPAEGTDLAALAAKYISVTPLRLDRTDEAFSATLAKTLG.

Positions 8, 9, 40, and 93 each coordinate a divalent metal cation.

The protein belongs to the SurE nucleotidase family. Requires a divalent metal cation as cofactor.

The protein resides in the cytoplasm. The catalysed reaction is a ribonucleoside 5'-phosphate + H2O = a ribonucleoside + phosphate. Nucleotidase that shows phosphatase activity on nucleoside 5'-monophosphates. The polypeptide is 5'-nucleotidase SurE (Rhodopseudomonas palustris (strain HaA2)).